The following is a 735-amino-acid chain: Muskelin (735 aa).

N-acetylalanine is present on A2. Positions 172 to 204 (REQEAIRLCLKHFRQHNYTEAFESLQKKTKIAL) constitute a LisH domain. Residues 206 to 258 (HPMLTDMHDKLVLKGDFDACEELIEKAVNDGLFNQYISQQEYKPRWSQIIPKS) form the CTLH domain. 6 Kelch repeats span residues 284–330 (TVYL…SCHK), 339–391 (QIYT…FDHQ), 400–458 (MIYT…SRIG), 469–515 (CLYV…TGFT), 526–578 (EIHV…SLQE), and 597–651 (VHYL…AQMD).

In terms of assembly, homodimer; may form higher oligomers. Identified in the CTLH complex that contains GID4, RANBP9 and/or RANBP10, MKLN1, MAEA, RMND5A (or alternatively its paralog RMND5B), GID8, ARMC8, WDR26 and YPEL5. Within this complex, MAEA, RMND5A (or alternatively its paralog RMND5B), GID8, WDR26, and RANBP9 and/or RANBP10 form the catalytic core, while GID4, MKLN1, ARMC8 and YPEL5 have ancillary roles. Interacts with RANBP9. Part of a complex consisting of RANBP9, MKLN1 and GID8. Interacts with GABRA1. Interacts with the C-terminal tail of PTGER3.

It is found in the cytoplasm. The protein resides in the cell projection. The protein localises to the ruffle. It localises to the cell cortex. Its subcellular location is the synapse. It is found in the postsynapse. In terms of biological role, component of the CTLH E3 ubiquitin-protein ligase complex that selectively accepts ubiquitin from UBE2H and mediates ubiquitination and subsequent proteasomal degradation of the transcription factor HBP1. Required for internalization of the GABA receptor GABRA1 from the cell membrane via endosomes and subsequent GABRA1 degradation. Acts as a mediator of cell spreading and cytoskeletal responses to the extracellular matrix component THBS1. The chain is Muskelin (Mkln1) from Rattus norvegicus (Rat).